The primary structure comprises 359 residues: Protein mab-21-like 2 (359 aa).

This sequence belongs to the mab-21 family. In terms of tissue distribution, expressed in the adult cerebellum and eye, with lower levels in the adult forebrain. In embryos at 10.5 days post-coitum strongly expressed in the rostral and distal regions of the developing neural retina, with no expression immediately adjacent to the closing optic fissure. Expression is also observed in the dorsal and ventral aspects of the developing forelimb bud and in the developing pharyngeal arches, as well as in the midbrain.

The protein resides in the nucleus. It localises to the cytoplasm. In terms of biological role, required for several aspects of embryonic development including normal development of the eye, notochord, neural tube and other organ tissues, and for embryonic turning. The sequence is that of Protein mab-21-like 2 (Mab21l2) from Mus musculus (Mouse).